We begin with the raw amino-acid sequence, 793 residues long: Lon protease 1 (793 aa).

The Lon N-terminal domain occupies 8–202 (VPVIPLKNSV…KLLDRLQELK (195 aa)). 354-361 (GPPGVGKT) is an ATP binding site. In terms of domain architecture, Lon proteolytic spans 590-770 (LLPPGVVTGL…NEVLKITLGV (181 aa)). Catalysis depends on residues Ser676 and Lys719.

This sequence belongs to the peptidase S16 family. In terms of assembly, homohexamer. Organized in a ring with a central cavity.

The protein resides in the cytoplasm. The catalysed reaction is Hydrolysis of proteins in presence of ATP.. Functionally, ATP-dependent serine protease that mediates the selective degradation of mutant and abnormal proteins as well as certain short-lived regulatory proteins. Required for cellular homeostasis and for survival from DNA damage and developmental changes induced by stress. Degrades polypeptides processively to yield small peptide fragments that are 5 to 10 amino acids long. Binds to DNA in a double-stranded, site-specific manner. This is Lon protease 1 from Bdellovibrio bacteriovorus (strain ATCC 15356 / DSM 50701 / NCIMB 9529 / HD100).